Here is a 408-residue protein sequence, read N- to C-terminus: ORC1-type DNA replication protein 15 (408 aa).

ATP-binding positions include 60-64 (VGKTA), Tyr208, and Arg220.

It belongs to the CDC6/cdc18 family.

In terms of biological role, involved in regulation of DNA replication. In Haloarcula marismortui (strain ATCC 43049 / DSM 3752 / JCM 8966 / VKM B-1809) (Halobacterium marismortui), this protein is ORC1-type DNA replication protein 15 (cdc6o).